Reading from the N-terminus, the 343-residue chain is Probable long-chain-alcohol O-fatty-acyltransferase 2 (343 aa).

Transmembrane regions (helical) follow at residues 7–27, 36–56, 58–78, 117–137, 148–168, 235–255, 260–280, and 292–312; these read NLIKVWISALISISYCYYISS, LLSLLPIFIIFLLLPLFFSSV, FCVISGFFFTWLANFKLFLFA, PMSKWVLAFKLLIFSFLLHVY, FAFLALFTIHVYLEAELILVF, GMLATFIVSGLMHELIYFYVI, TWEVTCFFLLHGVVTCLEIAM, and AVSGLAITVFLLVTAGWLFYP.

It belongs to the wax synthase family.

It is found in the membrane. It carries out the reaction a long chain fatty alcohol + a fatty acyl-CoA = a wax ester + CoA. Catalyzes the final step in the synthesis of long-chain linear esters (waxes). The protein is Probable long-chain-alcohol O-fatty-acyltransferase 2 (AT2) of Arabidopsis thaliana (Mouse-ear cress).